A 716-amino-acid chain; its full sequence is MARMSFVLAAYQMVLSLLMTSLTGSSLQSSECPQLCVCEIRPWFTPQSTYREATTVDCNDLRLTRIPSNLSSDTQVLLLQSNNIAKTVDELQQLFNLTELDFSQNNFTNIKEVGLANLTQLTTLHLEENQITEMNDYCLQDLSNLQELYINHNQISTISANAFSGLKNLLRLHLNSNKLKVIDSRWFDSTPNLEILMIGENPVIGILDMNFKPLSNLRSLVLAGMYLTDIPGNALVGLDSLESLSFYDNKLVKVPQLALQKVPNLKFLDLNKNPIHKIQEGDFKNMLRLKELGINNMGELVSVDRYALDNLPELTKLEATNNPKLSYIHRLAFRSVPALESLMLNNNALNAVYQKTVESLPNLREISIHSNPLRCDCVIHWINSNKTNIRFMEPLSMFCAMPPEYRGQQVKEVLIQDSSEQCLPMISHDTFPNHLNMDIGTTVFLDCRAMAEPEPEIYWVTPLGNKITVETLSEKYKLSSEGTLEISKIQIEDSGRYTCVAQNVEGADTRVVMIKVNGTLLDGAQVLKIYVKQTESHSILVSWKVNSNVMTSNLKWSSATMKIDNPHITYTARVPVDVHEYNLTHLQPSTDYEVCLTVSNIHQQTQKSCVNVTTKNAAFALDISDQETSTALAAVMGSMFAVISLASIAVYIAKRFKRKNYHHSLKKYMQKTSSIPLNELYPPLINLWEGDSEKDKDGTADTKPTQVDTSRSYYMW.

The signal sequence occupies residues 1 to 25 (MARMSFVLAAYQMVLSLLMTSLTGS). The 47-residue stretch at 26–72 (SLQSSECPQLCVCEIRPWFTPQSTYREATTVDCNDLRLTRIPSNLSS) folds into the LRRNT domain. Topologically, residues 26–631 (SLQSSECPQL…DISDQETSTA (606 aa)) are extracellular. Asn69 is a glycosylation site (N-linked (GlcNAc...) asparagine). LRR repeat units follow at residues 73 to 95 (DTQV…QQLF), 96 to 117 (NLTE…GLAN), 120 to 141 (QLTT…CLQD), 144 to 165 (NLQE…AFSG), 168 to 189 (NLLR…WFDS), 192 to 213 (NLEI…NFKP), 216 to 237 (NLRS…ALVG), 240 to 261 (SLES…ALQK), and 264 to 285 (NLKF…DFKN). N-linked (GlcNAc...) asparagine glycans are attached at residues Asn96, Asn106, and Asn117. One can recognise an LRRCT domain in the interval 371–424 (NPLRCDCVIHWINSNKTNIRFMEPLSMFCAMPPEYRGQQVKEVLIQDSSEQCLP). The N-linked (GlcNAc...) asparagine glycan is linked to Asn385. In terms of domain architecture, Ig-like C2-type spans 424-515 (PMISHDTFPN…GADTRVVMIK (92 aa)). An intrachain disulfide couples Cys447 to Cys499. N-linked (GlcNAc...) asparagine glycans are attached at residues Asn517, Asn582, and Asn611. The Fibronectin type-III domain maps to 525–617 (QVLKIYVKQT…SCVNVTTKNA (93 aa)). The helical transmembrane segment at 632-652 (LAAVMGSMFAVISLASIAVYI) threads the bilayer. The Cytoplasmic portion of the chain corresponds to 653-716 (AKRFKRKNYH…VDTSRSYYMW (64 aa)). Positions 691-700 (DSEKDKDGTA) are enriched in basic and acidic residues. The disordered stretch occupies residues 691-716 (DSEKDKDGTADTKPTQVDTSRSYYMW). Polar residues predominate over residues 702–716 (TKPTQVDTSRSYYMW).

Its subcellular location is the membrane. This is Leucine-rich repeat neuronal protein 1 (LRRN1) from Bos taurus (Bovine).